The sequence spans 203 residues: Auxin-responsive protein IAA4 (203 aa).

Residues 1-31 (MEECKGGGMSPSSSMDSSTHPALSTTSSAAT) form a disordered region. A compositionally biased stretch (low complexity) spans 10–31 (SPSSSMDSSTHPALSTTSSAAT). The EAR-like (transcriptional repression) motif lies at 40-44 (LRLGL). The PB1 domain occupies 108–202 (TLFVKVYMEG…KKLRIARMDK (95 aa)).

The protein belongs to the Aux/IAA family. In terms of assembly, homodimers and heterodimers.

It is found in the nucleus. Functionally, aux/IAA proteins are short-lived transcriptional factors that function as repressors of early auxin response genes at low auxin concentrations. The protein is Auxin-responsive protein IAA4 (IAA4) of Oryza sativa subsp. japonica (Rice).